Here is a 97-residue protein sequence, read N- to C-terminus: NADH-ubiquinone oxidoreductase chain 4L (97 aa).

Transmembrane regions (helical) follow at residues 1–21 (MSYL…IILN), 25–45 (LIIM…LLLF), and 57–77 (IFAI…LAIM).

The protein belongs to the complex I subunit 4L family.

It localises to the mitochondrion membrane. It catalyses the reaction a ubiquinone + NADH + 5 H(+)(in) = a ubiquinol + NAD(+) + 4 H(+)(out). In terms of biological role, core subunit of the mitochondrial membrane respiratory chain NADH dehydrogenase (Complex I) that is believed to belong to the minimal assembly required for catalysis. Complex I functions in the transfer of electrons from NADH to the respiratory chain. The immediate electron acceptor for the enzyme is believed to be ubiquinone. The sequence is that of NADH-ubiquinone oxidoreductase chain 4L (ND4L) from Sarcophyton glaucum (Toadstool umbrella leather coral).